A 123-amino-acid chain; its full sequence is Large ribosomal subunit protein bL12 (123 aa).

Belongs to the bacterial ribosomal protein bL12 family. Homodimer. Part of the ribosomal stalk of the 50S ribosomal subunit. Forms a multimeric L10(L12)X complex, where L10 forms an elongated spine to which 2 to 4 L12 dimers bind in a sequential fashion. Binds GTP-bound translation factors.

Functionally, forms part of the ribosomal stalk which helps the ribosome interact with GTP-bound translation factors. Is thus essential for accurate translation. This is Large ribosomal subunit protein bL12 from Rhodopseudomonas palustris (strain BisB18).